Reading from the N-terminus, the 174-residue chain is Endoribonuclease YbeY (174 aa).

Zn(2+) contacts are provided by His129, His133, and His139.

Belongs to the endoribonuclease YbeY family. Requires Zn(2+) as cofactor.

The protein resides in the cytoplasm. In terms of biological role, single strand-specific metallo-endoribonuclease involved in late-stage 70S ribosome quality control and in maturation of the 3' terminus of the 16S rRNA. This Lactobacillus acidophilus (strain ATCC 700396 / NCK56 / N2 / NCFM) protein is Endoribonuclease YbeY.